The primary structure comprises 447 residues: MAGYEVNFDGLVGLTHHYAGLSFGNEASTTHQNHTSNPRLAAKQGLLKMKALADLGYKQGVLPPQERPAIGVLRKLGFSGSDEQVLSDVARNAPRLLSAVSSASSMWTANAATVSPSADSADGRVHFTVANLHNKFHRAIEAETTAVLLPAVFNNHRHFVHHNALPSVTLLGDEGAANHNRLGGEYASPAIQMFVYGRQGMESGAVPGRYPARQTREASQAVARLHQLDPKRTVFVQQNPAVIDQGVFHNDVIAVSNRNVLFHHELAFLSSTQVMDDIRCKMAGLEQQLVNIEVPEAEVSVADAVSTYLFNSQLLHKANGKMLLVIPQESQDNPSVWRYLSELVSGDGPIDELRVFDLRESMRNGGGPACLRLRVVLNDAELQAVNSRVMLTPALFVTLNNWVDQHYRDHLQFKDLADPHLLQEGRQALDELTRILNLGPVYPFQRN.

Substrate-binding positions include Ala19–Ser28, Asn110, and His137–Arg138. Glu174 is an active-site residue. Arg213 serves as a coordination point for substrate. The active site involves His249. Positions 251 and 364 each coordinate substrate. The active-site Nucleophile is the Cys370.

The protein belongs to the succinylarginine dihydrolase family. In terms of assembly, homodimer.

The enzyme catalyses N(2)-succinyl-L-arginine + 2 H2O + 2 H(+) = N(2)-succinyl-L-ornithine + 2 NH4(+) + CO2. It participates in amino-acid degradation; L-arginine degradation via AST pathway; L-glutamate and succinate from L-arginine: step 2/5. Catalyzes the hydrolysis of N(2)-succinylarginine into N(2)-succinylornithine, ammonia and CO(2). This is N-succinylarginine dihydrolase from Yersinia pseudotuberculosis serotype O:1b (strain IP 31758).